Consider the following 249-residue polypeptide: Secreted flagellin C (249 aa).

As to quaternary structure, interacts with FliS.

The protein resides in the secreted. Functionally, might play a role in virulence. The chain is Secreted flagellin C (flaC) from Campylobacter jejuni subsp. jejuni serotype O:6 (strain 81116 / NCTC 11828).